A 509-amino-acid chain; its full sequence is MKDKKISKSIKMQVQKIPTGIEGFDDVCRGGLPAARSTLVSGTSGTGKTVFSLQYLHHGICNFDEPGIFITFEESPLDIIRNAASFGWDLQKLIDQNKLFILDASPDPDGQDVAGNFDLSGLIERISYAIRKYKAKRVAIDSITAVFQQYDAIYVVRREIFRLIARLKEIGVTTVMTTERVDDYGPIARYGVEEFVSDNVVLLRNVLEAEKRRRTLEVLKLRGTVHMKGEFPFTMGDDGIIVFALGAMRLTQRSSNIRISSGVKDLDEMCGGGYFQDSIILATGATGTGKTMLVSKFIEDAYNNKERAILFAYEESRAQLNRNATSWGIDFEKMENEGLLKIICAYPESTGLEDHLQIIKSQINEFKPKRLAIDSLSALARGVSLNAFRQFVIGVTGYSKQEEIAGFFTNTAEEFMGSHSITDSHISTITDTILLLQYVEIKGEMARAINVFKMRGSWHDKRIREYIITGQGPEIKDSFSNFEQIFSGAPHRVISDQSIPNVFKGIEKN.

2 consecutive KaiC domains span residues 1-243 (MKDK…IIVF) and 257-509 (IRIS…IEKN). Positions 45, 46, 47, 48, 49, 85, 220, 221, 222, 224, 226, 237, 286, 287, 288, 289, 290, and 291 each coordinate ATP. Residue T49 coordinates Mg(2+). 2 residues coordinate Mg(2+): T291 and E314. ATP is bound at residue W327. Phosphoserine; by autocatalysis is present on S427. At T428 the chain carries Phosphothreonine; by autocatalysis. ATP-binding residues include R447, K453, M454, R455, S457, H459, and K461.

It belongs to the KaiC family. Homohexamer; hexamerization is dependent on ATP-binding. Component of the KaiBC complex. KaiC interacts with SasA, activating its autokinase function and leading to RpaA activation. It depends on Mg(2+) as a cofactor. In terms of processing, phosphorylated on serine and threonine residues by autocatalysis. Has a 4 step phosphorylation cycle; the autokinase acts first on Thr-428, then Ser-427. When Ser-427 is modified KaiC switches to an autophosphatase mode, acting first on phospho-Thr-428 then phospho-Ser-427.

It carries out the reaction L-seryl-[protein] + ATP = O-phospho-L-seryl-[protein] + ADP + H(+). The catalysed reaction is L-threonyl-[protein] + ATP = O-phospho-L-threonyl-[protein] + ADP + H(+). It catalyses the reaction ATP + H2O = ADP + phosphate + H(+). Its function is as follows. Central component of the KaiBC oscillator complex, which constitutes the main circadian regulator in cyanobacteria. Its composition changes during the circadian cycle to control KaiC phosphorylation. Autophosphorylates and has a weak ATPase activity; ATPase activity defines the circadian period. This Prochlorococcus marinus subsp. pastoris (strain CCMP1986 / NIES-2087 / MED4) protein is Circadian clock oscillator protein KaiC.